Reading from the N-terminus, the 383-residue chain is Chaperone protein DnaJ (383 aa).

The region spanning 6–71 (DYYEVLGVSK…QKRSQYDQFG (66 aa)) is the J domain. The segment at 141–223 (GVEKKVKVKK…CKGEGVEIGE (83 aa)) adopts a CR-type zinc-finger fold. The Zn(2+) site is built by C154, C157, C171, C174, C197, C200, C211, and C214. CXXCXGXG motif repeat units lie at residues 154–161 (CSKCRGDG), 171–178 (CQTCHGTG), 197–204 (CPTCHGEG), and 211–218 (CSKCKGEG).

This sequence belongs to the DnaJ family. As to quaternary structure, homodimer. It depends on Zn(2+) as a cofactor.

It localises to the cytoplasm. Participates actively in the response to hyperosmotic and heat shock by preventing the aggregation of stress-denatured proteins and by disaggregating proteins, also in an autonomous, DnaK-independent fashion. Unfolded proteins bind initially to DnaJ; upon interaction with the DnaJ-bound protein, DnaK hydrolyzes its bound ATP, resulting in the formation of a stable complex. GrpE releases ADP from DnaK; ATP binding to DnaK triggers the release of the substrate protein, thus completing the reaction cycle. Several rounds of ATP-dependent interactions between DnaJ, DnaK and GrpE are required for fully efficient folding. Also involved, together with DnaK and GrpE, in the DNA replication of plasmids through activation of initiation proteins. The sequence is that of Chaperone protein DnaJ from Porphyromonas gingivalis (strain ATCC BAA-308 / W83).